A 366-amino-acid chain; its full sequence is Beta sliding clamp (366 aa).

This sequence belongs to the beta sliding clamp family. In terms of assembly, forms a ring-shaped head-to-tail homodimer around DNA which binds and tethers DNA polymerases and other proteins to the DNA. The DNA replisome complex has a single clamp-loading complex (3 tau and 1 each of delta, delta', psi and chi subunits) which binds 3 Pol III cores (1 core on the leading strand and 2 on the lagging strand) each with a beta sliding clamp dimer. Additional proteins in the replisome are other copies of gamma, psi and chi, Ssb, DNA helicase and RNA primase.

It localises to the cytoplasm. Functionally, confers DNA tethering and processivity to DNA polymerases and other proteins. Acts as a clamp, forming a ring around DNA (a reaction catalyzed by the clamp-loading complex) which diffuses in an ATP-independent manner freely and bidirectionally along dsDNA. Initially characterized for its ability to contact the catalytic subunit of DNA polymerase III (Pol III), a complex, multichain enzyme responsible for most of the replicative synthesis in bacteria; Pol III exhibits 3'-5' exonuclease proofreading activity. The beta chain is required for initiation of replication as well as for processivity of DNA replication. This is Beta sliding clamp (dnaN) from Salmonella typhimurium (strain LT2 / SGSC1412 / ATCC 700720).